The following is a 160-amino-acid chain: UPF0178 protein PSPA7_5991 (160 aa).

This sequence belongs to the UPF0178 family.

This is UPF0178 protein PSPA7_5991 from Pseudomonas paraeruginosa (strain DSM 24068 / PA7) (Pseudomonas aeruginosa (strain PA7)).